The chain runs to 1068 residues: Carbamoyl phosphate synthase large chain (1068 aa).

Residues 1 to 401 (MPRRTDLHRI…SLLKAVRSLE (401 aa)) are carboxyphosphate synthetic domain. Positions 129, 169, 175, 176, 208, 210, 215, 241, 242, 243, 284, and 298 each coordinate ATP. Residues 133-327 (KQLMDELGQP…IAKIAAKIAV (195 aa)) form the ATP-grasp 1 domain. Mg(2+) contacts are provided by Q284, E298, and N300. The Mn(2+) site is built by Q284, E298, and N300. The tract at residues 402–546 (IGVDHLALRE…YSTYEMENES (145 aa)) is oligomerization domain. Residues 547-935 (KKSQRPSVLV…ALYKVFEAAN (389 aa)) are carbamoyl phosphate synthetic domain. The region spanning 671-867 (ESLLAELGIP…MAEVATRIIL (197 aa)) is the ATP-grasp 2 domain. Residues R707, R746, L748, E752, G777, V778, H779, S780, Q820, and E838 each coordinate ATP. Positions 820, 838, and 840 each coordinate Mg(2+). Positions 820, 838, and 840 each coordinate Mn(2+). Residues 936 to 1068 (LHVPEYGKIL…ESRVFSTESI (133 aa)) form the MGS-like domain. Residues 936-1068 (LHVPEYGKIL…ESRVFSTESI (133 aa)) form an allosteric domain region.

It belongs to the CarB family. As to quaternary structure, composed of two chains; the small (or glutamine) chain promotes the hydrolysis of glutamine to ammonia, which is used by the large (or ammonia) chain to synthesize carbamoyl phosphate. Tetramer of heterodimers (alpha,beta)4. The cofactor is Mg(2+). It depends on Mn(2+) as a cofactor.

It catalyses the reaction hydrogencarbonate + L-glutamine + 2 ATP + H2O = carbamoyl phosphate + L-glutamate + 2 ADP + phosphate + 2 H(+). It carries out the reaction hydrogencarbonate + NH4(+) + 2 ATP = carbamoyl phosphate + 2 ADP + phosphate + 2 H(+). Its pathway is amino-acid biosynthesis; L-arginine biosynthesis; carbamoyl phosphate from bicarbonate: step 1/1. It functions in the pathway pyrimidine metabolism; UMP biosynthesis via de novo pathway; (S)-dihydroorotate from bicarbonate: step 1/3. In terms of biological role, large subunit of the glutamine-dependent carbamoyl phosphate synthetase (CPSase). CPSase catalyzes the formation of carbamoyl phosphate from the ammonia moiety of glutamine, carbonate, and phosphate donated by ATP, constituting the first step of 2 biosynthetic pathways, one leading to arginine and/or urea and the other to pyrimidine nucleotides. The large subunit (synthetase) binds the substrates ammonia (free or transferred from glutamine from the small subunit), hydrogencarbonate and ATP and carries out an ATP-coupled ligase reaction, activating hydrogencarbonate by forming carboxy phosphate which reacts with ammonia to form carbamoyl phosphate. The protein is Carbamoyl phosphate synthase large chain of Cutibacterium acnes (strain DSM 16379 / KPA171202) (Propionibacterium acnes).